A 115-amino-acid chain; its full sequence is T cell receptor beta variable 2 (115 aa).

The N-terminal stretch at 1 to 19 (MDTWLVCWAIFSLLKAGLT) is a signal peptide. An Ig-like domain is found at 21–115 (PEVTQTPSHQ…SAMYFCASSE (95 aa)). An intrachain disulfide couples C42 to C111. N93 is a glycosylation site (N-linked (GlcNAc...) asparagine).

As to quaternary structure, alpha-beta TR is a heterodimer composed of an alpha and beta chain; disulfide-linked. The alpha-beta TR is associated with the transmembrane signaling CD3 coreceptor proteins to form the TR-CD3 (TcR or TCR). The assembly of alpha-beta TR heterodimers with CD3 occurs in the endoplasmic reticulum where a single alpha-beta TR heterodimer associates with one CD3D-CD3E heterodimer, one CD3G-CD3E heterodimer and one CD247 homodimer forming a stable octameric structure. CD3D-CD3E and CD3G-CD3E heterodimers preferentially associate with TR alpha and TR beta chains, respectively. The association of the CD247 homodimer is the last step of TcR assembly in the endoplasmic reticulum and is required for transport to the cell surface.

Its subcellular location is the cell membrane. Functionally, v region of the variable domain of T cell receptor (TR) beta chain that participates in the antigen recognition. Alpha-beta T cell receptors are antigen specific receptors which are essential to the immune response and are present on the cell surface of T lymphocytes. Recognize peptide-major histocompatibility (MH) (pMH) complexes that are displayed by antigen presenting cells (APC), a prerequisite for efficient T cell adaptive immunity against pathogens. Binding of alpha-beta TR to pMH complex initiates TR-CD3 clustering on the cell surface and intracellular activation of LCK that phosphorylates the ITAM motifs of CD3G, CD3D, CD3E and CD247 enabling the recruitment of ZAP70. In turn ZAP70 phosphorylates LAT, which recruits numerous signaling molecules to form the LAT signalosome. The LAT signalosome propagates signal branching to three major signaling pathways, the calcium, the mitogen-activated protein kinase (MAPK) kinase and the nuclear factor NF-kappa-B (NF-kB) pathways, leading to the mobilization of transcription factors that are critical for gene expression and essential for T cell growth and differentiation. The T cell repertoire is generated in the thymus, by V-(D)-J rearrangement. This repertoire is then shaped by intrathymic selection events to generate a peripheral T cell pool of self-MH restricted, non-autoaggressive T cells. Post-thymic interaction of alpha-beta TR with the pMH complexes shapes TR structural and functional avidity. The chain is T cell receptor beta variable 2 from Homo sapiens (Human).